A 430-amino-acid chain; its full sequence is UDP-N-acetylglucosamine 1-carboxyvinyltransferase 1 (430 aa).

22 to 23 (KN) provides a ligand contact to phosphoenolpyruvate. R93 contacts UDP-N-acetyl-alpha-D-glucosamine. C117 functions as the Proton donor in the catalytic mechanism. C117 is subject to 2-(S-cysteinyl)pyruvic acid O-phosphothioketal. UDP-N-acetyl-alpha-D-glucosamine-binding positions include 122–126 (RPVDL), D305, and V327.

The protein belongs to the EPSP synthase family. MurA subfamily.

Its subcellular location is the cytoplasm. The enzyme catalyses phosphoenolpyruvate + UDP-N-acetyl-alpha-D-glucosamine = UDP-N-acetyl-3-O-(1-carboxyvinyl)-alpha-D-glucosamine + phosphate. Its pathway is cell wall biogenesis; peptidoglycan biosynthesis. Functionally, cell wall formation. Adds enolpyruvyl to UDP-N-acetylglucosamine. The protein is UDP-N-acetylglucosamine 1-carboxyvinyltransferase 1 of Listeria monocytogenes serotype 4b (strain F2365).